The primary structure comprises 159 residues: Crossover junction endodeoxyribonuclease RuvC (159 aa).

Residues D7, E67, and D139 contribute to the active site. D7, E67, and D139 together coordinate Mg(2+).

This sequence belongs to the RuvC family. As to quaternary structure, homodimer which binds Holliday junction (HJ) DNA. The HJ becomes 2-fold symmetrical on binding to RuvC with unstacked arms; it has a different conformation from HJ DNA in complex with RuvA. In the full resolvosome a probable DNA-RuvA(4)-RuvB(12)-RuvC(2) complex forms which resolves the HJ. Requires Mg(2+) as cofactor.

Its subcellular location is the cytoplasm. The catalysed reaction is Endonucleolytic cleavage at a junction such as a reciprocal single-stranded crossover between two homologous DNA duplexes (Holliday junction).. The RuvA-RuvB-RuvC complex processes Holliday junction (HJ) DNA during genetic recombination and DNA repair. Endonuclease that resolves HJ intermediates. Cleaves cruciform DNA by making single-stranded nicks across the HJ at symmetrical positions within the homologous arms, yielding a 5'-phosphate and a 3'-hydroxyl group; requires a central core of homology in the junction. The consensus cleavage sequence is 5'-(A/T)TT(C/G)-3'. Cleavage occurs on the 3'-side of the TT dinucleotide at the point of strand exchange. HJ branch migration catalyzed by RuvA-RuvB allows RuvC to scan DNA until it finds its consensus sequence, where it cleaves and resolves the cruciform DNA. This chain is Crossover junction endodeoxyribonuclease RuvC, found in Orientia tsutsugamushi (strain Boryong) (Rickettsia tsutsugamushi).